Here is a 294-residue protein sequence, read N- to C-terminus: Acetyl-coenzyme A carboxylase carboxyl transferase subunit beta (294 aa).

The CoA carboxyltransferase N-terminal domain occupies 30 to 294 (IMTKCPECKK…PGVGGEVDGE (265 aa)). Residues cysteine 34, cysteine 37, cysteine 53, and cysteine 56 each contribute to the Zn(2+) site. Residues 34–56 (CPECKKIMYTKELQKNLMVCNYC) form a C4-type zinc finger.

It belongs to the AccD/PCCB family. Acetyl-CoA carboxylase is a heterohexamer composed of biotin carboxyl carrier protein (AccB), biotin carboxylase (AccC) and two subunits each of ACCase subunit alpha (AccA) and ACCase subunit beta (AccD). Requires Zn(2+) as cofactor.

It is found in the cytoplasm. It carries out the reaction N(6)-carboxybiotinyl-L-lysyl-[protein] + acetyl-CoA = N(6)-biotinyl-L-lysyl-[protein] + malonyl-CoA. It participates in lipid metabolism; malonyl-CoA biosynthesis; malonyl-CoA from acetyl-CoA: step 1/1. Functionally, component of the acetyl coenzyme A carboxylase (ACC) complex. Biotin carboxylase (BC) catalyzes the carboxylation of biotin on its carrier protein (BCCP) and then the CO(2) group is transferred by the transcarboxylase to acetyl-CoA to form malonyl-CoA. In Listeria monocytogenes serovar 1/2a (strain ATCC BAA-679 / EGD-e), this protein is Acetyl-coenzyme A carboxylase carboxyl transferase subunit beta.